The sequence spans 188 residues: Photosystem I assembly protein Ycf4 (188 aa).

2 helical membrane passes run 22–42 and 68–88; these read LGWASVLLLGTSGFLLTGLSS and LVMCFYGIAGLFLSTYLWCAI.

This sequence belongs to the Ycf4 family.

It localises to the plastid. The protein localises to the chloroplast thylakoid membrane. In terms of biological role, seems to be required for the assembly of the photosystem I complex. The chain is Photosystem I assembly protein Ycf4 from Zygnema circumcarinatum (Green alga).